The following is a 268-amino-acid chain: MQKIIVFILCCFMTFFLYACSSKFENVNPLGRSFGEFEDTDPLKLGLEPTFPTNQEIPSLISGADLVPITPITPPLTRTSNSANNNAANGINPRFKDEAFNDVLIFENRPAVSDFLTILGPSGAALTVWALAQGNWIWGYTLIDSKGFGDARVWQLLLYPNDFAMIKNAKTNTCLNAYGNGIVHYPCDASNHAQMWKLIPMSNTAVQIKNLGNGKCIQAPITNLYGDFHKVFKIFTVECAKKDNFDQQWFLTTPPFTAKPLYRQGEVR.

Positions 1–19 (MQKIIVFILCCFMTFFLYA) are cleaved as a signal peptide. Cys20 carries N-palmitoyl cysteine lipidation. Cys20 is lipidated: S-diacylglycerol cysteine. One can recognise a Ricin B-type lectin domain in the interval 112 to 252 (VSDFLTILGP…DNFDQQWFLT (141 aa)). The interval 129-140 (WALAQGNWIWGY) is mediates binding to target cells.

As to quaternary structure, heterotrimer of 3 subunits, CdtA, CdtB and CdtC.

It localises to the cell outer membrane. Functionally, CDTs are cytotoxins which induce cell distension, growth arrest in G2/M phase, nucleus swelling, and chromatin fragmentation in HeLa cells. The sequence is that of Cytolethal distending toxin subunit A (cdtA) from Campylobacter jejuni subsp. jejuni serotype O:2 (strain ATCC 700819 / NCTC 11168).